Consider the following 132-residue polypeptide: Guanyl-specific ribonuclease C2 (132 aa).

A signal peptide spans 1-26 (MLYNKLITIAALLVPALAAPQGLDVR). 2 cysteine pairs are disulfide-bonded: Cys-28–Cys-36 and Cys-32–Cys-129. Residue His-66 is part of the active site. The active-site Proton acceptor is the Glu-84. Catalysis depends on His-118, which acts as the Proton donor.

The protein belongs to the ribonuclease N1/T1 family.

It is found in the secreted. It carries out the reaction [RNA] containing guanosine + H2O = an [RNA fragment]-3'-guanosine-3'-phosphate + a 5'-hydroxy-ribonucleotide-3'-[RNA fragment].. The sequence is that of Guanyl-specific ribonuclease C2 from Aspergillus clavatus (strain ATCC 1007 / CBS 513.65 / DSM 816 / NCTC 3887 / NRRL 1 / QM 1276 / 107).